The sequence spans 209 residues: Superoxide dismutase [Mn/Fe] (209 aa).

Residues His-38, His-90, Asp-172, and His-176 each coordinate Fe(3+). His-38, His-90, Asp-172, and His-176 together coordinate Mn(2+).

This sequence belongs to the iron/manganese superoxide dismutase family. Mn(2+) serves as cofactor. Fe(3+) is required as a cofactor.

The catalysed reaction is 2 superoxide + 2 H(+) = H2O2 + O2. Destroys superoxide anion radicals which are normally produced within the cells and which are toxic to biological systems. Catalyzes the dismutation of superoxide anion radicals into O2 and H2O2 by successive reduction and oxidation of the transition metal ion at the active site. This chain is Superoxide dismutase [Mn/Fe] (sodB), found in Rickettsia prowazekii (strain Madrid E).